The following is a 1429-amino-acid chain: Gag-Pol polyprotein (1429 aa).

Glycine 2 is lipidated: N-myristoyl glycine; by host. The tract at residues 7–31 is interaction with Gp41; the sequence is VLSGGKLDKWEKIQLRPGGKKKYRL. The interval 8–43 is interaction with host CALM1; that stretch reads LSGGKLDKWEKIQLRPGGKKKYRLKHLVWASRELER. The interaction with host AP3D1 stretch occupies residues 12-19; the sequence is KLDKWEKI. An interaction with membrane phosphatidylinositol 4,5-bisphosphate and RNA region spans residues 14 to 33; it reads DKWEKIQLRPGGKKKYRLKH. Positions 16–22 match the Nuclear export signal motif; it reads WEKIQLR. The Nuclear localization signal signature appears at 26–32; sequence KKKYRLK. The segment at 73–77 is interaction with membrane phosphatidylinositol 4,5-bisphosphate; it reads EELRS. The tract at residues 105–124 is disordered; it reads EEEQNRTQQKTQQGKADKGV. Over residues 110 to 124 the composition is skewed to polar residues; it reads RTQQKTQQGKADKGV. Tyrosine 128 is modified (phosphotyrosine; by host). Residues 185-223 are interaction with human PPIA/CYPA and NUP153; it reads NTVGGHQAAMQMLKDTINEEAAEWDRMHPVQAGPIPPGQ. The segment at 273 to 359 is dimerization/Multimerization of capsid protein p24; the sequence is YSPVSILDIR…GGPGHKARVL (87 aa). 2 CCHC-type zinc fingers span residues 385–402 and 406–423; these read IKCF…NCRA and KGCW…DCSE. Positions 439–479 are disordered; it reads EARKFSSEQTRANSPTSRELWVRGEDNPLSETGNERSGTGS. Polar residues-rich tracts occupy residues 445 to 455 and 467 to 479; these read SEQTRANSPTS and LSET…GTGS. The segment at 484–488 is dimerization of protease; sequence PQITL. The Peptidase A2 domain maps to 503–572; the sequence is REALLDTGAD…TPVNIIGRNM (70 aa). Aspartate 508 (for protease activity; shared with dimeric partner) is an active-site residue. 2 dimerization of protease regions span residues 532 to 538 and 571 to 583; these read GIGGFIK and NMLT…LNFP. The 191-residue stretch at 626–816 folds into the Reverse transcriptase domain; sequence EGKISKIGPE…PPFLWMGYEL (191 aa). Aspartate 692, aspartate 767, and aspartate 768 together coordinate Mg(2+). Positions 809 to 817 are RT 'primer grip'; it reads FLWMGYELH. Residues 980–996 carry the Tryptophan repeat motif motif; it reads WGTWWTEYWQATWIPEW. In terms of domain architecture, RNase H type-1 spans 1016 to 1139; that stretch reads IVGAETFYVD…VDKLVSSGIR (124 aa). Positions 1025, 1060, 1080, and 1131 each coordinate Mg(2+). The segment at 1145-1186 adopts an Integrase-type zinc-finger fold; sequence DGIDKAQEEHEKYHNNWRAMASDFNLPPVVAKEIVASCDKCQ. The Zn(2+) site is built by histidine 1154, histidine 1158, cysteine 1182, and cysteine 1185. In terms of domain architecture, Integrase catalytic spans 1196-1346; sequence VDCSPGIWQL…SAGERIIDII (151 aa). 3 residues coordinate Mg(2+): aspartate 1206, aspartate 1258, and glutamate 1294. The segment at residues 1365-1411 is a DNA-binding region (integrase-type); sequence FRVYYRDSREPIWKGPAKLLWKGEGAVVIQNSEIKVVPRRKAKIIRD.

Homotrimer; further assembles as hexamers of trimers. Interacts with gp41 (via C-terminus). Interacts with host CALM1; this interaction induces a conformational change in the Matrix protein, triggering exposure of the myristate group. Interacts with host AP3D1; this interaction allows the polyprotein trafficking to multivesicular bodies during virus assembly. Part of the pre-integration complex (PIC) which is composed of viral genome, matrix protein, Vpr and integrase. As to quaternary structure, homodimer; the homodimer further multimerizes as homohexamers or homopentamers. Interacts with human PPIA/CYPA; This interaction stabilizes the capsid. Interacts with human NUP153. Interacts with host PDZD8; this interaction stabilizes the capsid. Interacts with monkey TRIM5; this interaction destabilizes the capsid. In terms of assembly, homodimer, whose active site consists of two apposed aspartic acid residues. Heterodimer of p66 RT and p51 RT (RT p66/p51). Heterodimerization of RT is essential for DNA polymerase activity. The overall folding of the subdomains is similar in p66 RT and p51 RT but the spatial arrangements of the subdomains are dramatically different. As to quaternary structure, homotetramer; may further associate as a homohexadecamer. Part of the pre-integration complex (PIC) which is composed of viral genome, matrix protein, Vpr and integrase. Interacts with human SMARCB1/INI1 and human PSIP1/LEDGF isoform 1. Interacts with human KPNA3; this interaction might play a role in nuclear import of the pre-integration complex. Interacts with human NUP153; this interaction might play a role in nuclear import of the pre-integration complex. The cofactor is Mg(2+). In terms of processing, specific enzymatic cleavages by the viral protease yield mature proteins. The protease is released by autocatalytic cleavage. The polyprotein is cleaved during and after budding, this process is termed maturation. Proteolytic cleavage of p66 RT removes the RNase H domain to yield the p51 RT subunit. Nucleocapsid protein p7 might be further cleaved after virus entry. Tyrosine phosphorylated presumably in the virion by a host kinase. Phosphorylation is apparently not a major regulator of membrane association. Post-translationally, phosphorylated possibly by host MAPK1; this phosphorylation is necessary for Pin1-mediated virion uncoating. In terms of processing, methylated by host PRMT6, impairing its function by reducing RNA annealing and the initiation of reverse transcription.

Its subcellular location is the host cell membrane. The protein resides in the host endosome. The protein localises to the host multivesicular body. It is found in the virion membrane. It localises to the host nucleus. Its subcellular location is the host cytoplasm. The protein resides in the virion. It carries out the reaction Specific for a P1 residue that is hydrophobic, and P1' variable, but often Pro.. The catalysed reaction is Endohydrolysis of RNA in RNA/DNA hybrids. Three different cleavage modes: 1. sequence-specific internal cleavage of RNA. Human immunodeficiency virus type 1 and Moloney murine leukemia virus enzymes prefer to cleave the RNA strand one nucleotide away from the RNA-DNA junction. 2. RNA 5'-end directed cleavage 13-19 nucleotides from the RNA end. 3. DNA 3'-end directed cleavage 15-20 nucleotides away from the primer terminus.. The enzyme catalyses 3'-end directed exonucleolytic cleavage of viral RNA-DNA hybrid.. It catalyses the reaction DNA(n) + a 2'-deoxyribonucleoside 5'-triphosphate = DNA(n+1) + diphosphate. Its activity is regulated as follows. Protease: The viral protease is inhibited by many synthetic protease inhibitors (PIs), such as amprenavir, atazanavir, indinavir, loprinavir, nelfinavir, ritonavir and saquinavir. Use of protease inhibitors in tritherapy regimens permit more ambitious therapeutic strategies. Reverse transcriptase/ribonuclease H: RT can be inhibited either by nucleoside RT inhibitors (NRTIs) or by non nucleoside RT inhibitors (NNRTIs). NRTIs act as chain terminators, whereas NNRTIs inhibit DNA polymerization by binding a small hydrophobic pocket near the RT active site and inducing an allosteric change in this region. Classical NRTIs are abacavir, adefovir (PMEA), didanosine (ddI), lamivudine (3TC), stavudine (d4T), tenofovir (PMPA), zalcitabine (ddC), and zidovudine (AZT). Classical NNRTIs are atevirdine (BHAP U-87201E), delavirdine, efavirenz (DMP-266), emivirine (I-EBU), and nevirapine (BI-RG-587). The tritherapies used as a basic effective treatment of AIDS associate two NRTIs and one NNRTI. Functionally, mediates, with Gag polyprotein, the essential events in virion assembly, including binding the plasma membrane, making the protein-protein interactions necessary to create spherical particles, recruiting the viral Env proteins, and packaging the genomic RNA via direct interactions with the RNA packaging sequence (Psi). Gag-Pol polyprotein may regulate its own translation, by the binding genomic RNA in the 5'-UTR. At low concentration, the polyprotein would promote translation, whereas at high concentration, the polyprotein would encapsidate genomic RNA and then shut off translation. In terms of biological role, targets the polyprotein to the plasma membrane via a multipartite membrane-binding signal, that includes its myristoylated N-terminus. Matrix protein is part of the pre-integration complex. Implicated in the release from host cell mediated by Vpu. Binds to RNA. Its function is as follows. Forms the conical core that encapsulates the genomic RNA-nucleocapsid complex in the virion. Most core are conical, with only 7% tubular. The core is constituted by capsid protein hexamer subunits. The core is disassembled soon after virion entry. Host restriction factors such as TRIM5-alpha or TRIMCyp bind retroviral capsids and cause premature capsid disassembly, leading to blocks in reverse transcription. Capsid restriction by TRIM5 is one of the factors which restricts HIV-1 to the human species. Host PIN1 apparently facilitates the virion uncoating. On the other hand, interactions with PDZD8 or CYPA stabilize the capsid. Encapsulates and protects viral dimeric unspliced genomic RNA (gRNA). Binds these RNAs through its zinc fingers. Acts as a nucleic acid chaperone which is involved in rearangement of nucleic acid secondary structure during gRNA retrotranscription. Also facilitates template switch leading to recombination. As part of the polyprotein, participates in gRNA dimerization, packaging, tRNA incorporation and virion assembly. Functionally, aspartyl protease that mediates proteolytic cleavages of Gag and Gag-Pol polyproteins during or shortly after the release of the virion from the plasma membrane. Cleavages take place as an ordered, step-wise cascade to yield mature proteins. This process is called maturation. Displays maximal activity during the budding process just prior to particle release from the cell. Also cleaves Nef and Vif, probably concomitantly with viral structural proteins on maturation of virus particles. Hydrolyzes host EIF4GI and PABP1 in order to shut off the capped cellular mRNA translation. The resulting inhibition of cellular protein synthesis serves to ensure maximal viral gene expression and to evade host immune response. Also mediates cleavage of host YTHDF3. Mediates cleavage of host CARD8, thereby activating the CARD8 inflammasome, leading to the clearance of latent HIV-1 in patient CD4(+) T-cells after viral reactivation; in contrast, HIV-1 can evade CARD8-sensing when its protease remains inactive in infected cells prior to viral budding. In terms of biological role, multifunctional enzyme that converts the viral RNA genome into dsDNA in the cytoplasm, shortly after virus entry into the cell. This enzyme displays a DNA polymerase activity that can copy either DNA or RNA templates, and a ribonuclease H (RNase H) activity that cleaves the RNA strand of RNA-DNA heteroduplexes in a partially processive 3' to 5' endonucleasic mode. Conversion of viral genomic RNA into dsDNA requires many steps. A tRNA(3)-Lys binds to the primer-binding site (PBS) situated at the 5'-end of the viral RNA. RT uses the 3' end of the tRNA primer to perform a short round of RNA-dependent minus-strand DNA synthesis. The reading proceeds through the U5 region and ends after the repeated (R) region which is present at both ends of viral RNA. The portion of the RNA-DNA heteroduplex is digested by the RNase H, resulting in a ssDNA product attached to the tRNA primer. This ssDNA/tRNA hybridizes with the identical R region situated at the 3' end of viral RNA. This template exchange, known as minus-strand DNA strong stop transfer, can be either intra- or intermolecular. RT uses the 3' end of this newly synthesized short ssDNA to perform the RNA-dependent minus-strand DNA synthesis of the whole template. RNase H digests the RNA template except for two polypurine tracts (PPTs) situated at the 5'-end and near the center of the genome. It is not clear if both polymerase and RNase H activities are simultaneous. RNase H probably can proceed both in a polymerase-dependent (RNA cut into small fragments by the same RT performing DNA synthesis) and a polymerase-independent mode (cleavage of remaining RNA fragments by free RTs). Secondly, RT performs DNA-directed plus-strand DNA synthesis using the PPTs that have not been removed by RNase H as primers. PPTs and tRNA primers are then removed by RNase H. The 3' and 5' ssDNA PBS regions hybridize to form a circular dsDNA intermediate. Strand displacement synthesis by RT to the PBS and PPT ends produces a blunt ended, linear dsDNA copy of the viral genome that includes long terminal repeats (LTRs) at both ends. Its function is as follows. Catalyzes viral DNA integration into the host chromosome, by performing a series of DNA cutting and joining reactions. This enzyme activity takes place after virion entry into a cell and reverse transcription of the RNA genome in dsDNA. The first step in the integration process is 3' processing. This step requires a complex comprising the viral genome, matrix protein, Vpr and integrase. This complex is called the pre-integration complex (PIC). The integrase protein removes 2 nucleotides from each 3' end of the viral DNA, leaving recessed CA OH's at the 3' ends. In the second step, the PIC enters cell nucleus. This process is mediated through integrase and Vpr proteins, and allows the virus to infect a non dividing cell. This ability to enter the nucleus is specific of lentiviruses, other retroviruses cannot and rely on cell division to access cell chromosomes. In the third step, termed strand transfer, the integrase protein joins the previously processed 3' ends to the 5' ends of strands of target cellular DNA at the site of integration. The 5'-ends are produced by integrase-catalyzed staggered cuts, 5 bp apart. A Y-shaped, gapped, recombination intermediate results, with the 5'-ends of the viral DNA strands and the 3' ends of target DNA strands remaining unjoined, flanking a gap of 5 bp. The last step is viral DNA integration into host chromosome. This involves host DNA repair synthesis in which the 5 bp gaps between the unjoined strands are filled in and then ligated. Since this process occurs at both cuts flanking the HIV genome, a 5 bp duplication of host DNA is produced at the ends of HIV-1 integration. Alternatively, Integrase may catalyze the excision of viral DNA just after strand transfer, this is termed disintegration. This is Gag-Pol polyprotein (gag-pol) from Homo sapiens (Human).